The following is a 204-amino-acid chain: Somatotropin (204 aa).

An N-terminal signal peptide occupies residues 1–17; sequence MDRVILLLSVVSLGVSS. The residue at position 18 (glutamine 18) is a Pyrrolidone carboxylic acid. Residue histidine 36 coordinates Zn(2+). The cysteines at positions 69 and 177 are disulfide-linked. Glutamate 186 contributes to the Zn(2+) binding site. An intrachain disulfide couples cysteine 194 to cysteine 202.

The protein belongs to the somatotropin/prolactin family.

The protein resides in the secreted. In terms of biological role, growth hormone plays an important role in growth control and is involved in the regulation of several anabolic processes. Implicated as an osmoregulatory substance important for seawater adaptation. This is Somatotropin (gh) from Sebastes schlegelii (Korean rockfish).